Consider the following 336-residue polypeptide: MLRLGYKASAEQFAPRDLLAYTVLAEQAGFDSVFVSDHLQPWRHTGGHAPAALPWLGAAAASTERVLLGTSVLTPTLRYHPGVVAQAFATLGCLAPGRVTLGVGSGESMNEAPLGLPWPDGKERYARFREAIALIQALWAGERVTIDGTYYSARDATIYDRPDVPVPLYVAASGPSATRLAGRVGDGFICTSGKGRELYTETLLPALAEGAAKSDRTLADLDLMIEMKVSYDPDHARALEATRNWGALALTSEEKVGVEDPVEMERLADALPTERTASRWIVSDDPDEHVERIWSYVEMGFTHLVFHDPRADQAAFLERYAEEILPRLRARERQVS.

Coenzyme F420-(gamma-Glu)n is bound at residue aspartate 37. Histidine 38 serves as the catalytic Proton donor. Coenzyme F420-(gamma-Glu)n contacts are provided by residues threonine 74 and 105–106; that span reads SG. Glutamate 107 serves as the catalytic Proton acceptor. Residues asparagine 110, 173 to 174, and 176 to 177 each bind coenzyme F420-(gamma-Glu)n; these read SG and SA. Threonine 191, lysine 194, lysine 255, and arginine 279 together coordinate substrate.

Belongs to the F420-dependent glucose-6-phosphate dehydrogenase family. As to quaternary structure, homodimer.

It carries out the reaction oxidized coenzyme F420-(gamma-L-Glu)(n) + D-glucose 6-phosphate + H(+) = 6-phospho-D-glucono-1,5-lactone + reduced coenzyme F420-(gamma-L-Glu)(n). Functionally, catalyzes the coenzyme F420-dependent oxidation of glucose 6-phosphate (G6P) to 6-phosphogluconolactone. In Beutenbergia cavernae (strain ATCC BAA-8 / DSM 12333 / CCUG 43141 / JCM 11478 / NBRC 16432 / NCIMB 13614 / HKI 0122), this protein is F420-dependent glucose-6-phosphate dehydrogenase.